Reading from the N-terminus, the 477-residue chain is UDP-N-acetylglucosamine pyrophosphorylase (477 aa).

Positions 109–112 (MAGG) match the Substrate binding motif. UTP-binding positions include 109–112 (MAGG), lysine 123, and glutamine 194. Position 218 is a phosphoserine (serine 218). Glycine 221 contacts UTP. Asparagine 222 serves as a coordination point for substrate. Aspartate 252 is a UTP binding site. A Substrate binding motif is present at residues 302–303 (EY). Residue lysine 377 coordinates UTP. Substrate is bound at residue lysine 409. Phosphoserine is present on serine 461.

Belongs to the UDPGP type 1 family.

It is found in the cytoplasm. The catalysed reaction is N-acetyl-alpha-D-glucosamine 1-phosphate + UTP + H(+) = UDP-N-acetyl-alpha-D-glucosamine + diphosphate. The protein operates within nucleotide-sugar biosynthesis; UDP-N-acetyl-alpha-D-glucosamine biosynthesis; UDP-N-acetyl-alpha-D-glucosamine from N-acetyl-alpha-D-glucosamine 1-phosphate: step 1/1. In terms of biological role, UDP-N-acetylglucosamine pyrophosphorylase that utilizes N-acetylglucosamine-1-phosphate as substrate. Together with AGM1, is involved in the production of UDP-N-acetylglucosamine from N-acetylglucosamine-6-phosphate. In Saccharomyces cerevisiae (strain ATCC 204508 / S288c) (Baker's yeast), this protein is UDP-N-acetylglucosamine pyrophosphorylase (QRI1).